Consider the following 308-residue polypeptide: tRNA dimethylallyltransferase (308 aa).

8-15 (GATAVGKT) lines the ATP pocket. Residue 10–15 (TAVGKT) participates in substrate binding. The tract at residues 33–36 (DSRQ) is interaction with substrate tRNA.

It belongs to the IPP transferase family. In terms of assembly, monomer. It depends on Mg(2+) as a cofactor.

It carries out the reaction adenosine(37) in tRNA + dimethylallyl diphosphate = N(6)-dimethylallyladenosine(37) in tRNA + diphosphate. Catalyzes the transfer of a dimethylallyl group onto the adenine at position 37 in tRNAs that read codons beginning with uridine, leading to the formation of N6-(dimethylallyl)adenosine (i(6)A). The polypeptide is tRNA dimethylallyltransferase (Kosmotoga olearia (strain ATCC BAA-1733 / DSM 21960 / TBF 19.5.1)).